The following is a 443-amino-acid chain: Nitrate/nitrite binding protein NrtA (443 aa).

The N-terminal stretch at 1 to 25 is a signal peptide; that stretch reads MSQFSRRKFLLTAGGTAAAALWLNA. Residue cysteine 26 is the site of N-palmitoyl cysteine attachment. Cysteine 26 carries the S-diacylglycerol cysteine lipid modification. The segment covering 31–46 has biased composition (low complexity); that stretch reads SSTDTTGSTSTPAPSG. The disordered stretch occupies residues 31–52; sequence SSTDTTGSTSTPAPSGTSGGDA. Nitrate contacts are provided by tryptophan 96, glutamine 150, histidine 195, glycine 239, and lysine 268.

This sequence belongs to the CmpA/NrtA family. As to quaternary structure, the complex is composed of two ATP-binding proteins (NrtC and NrtD), two transmembrane proteins (NrtB) and a solute-binding protein (NrtA). NrtA can form homotrimers. In terms of processing, the N-terminus is blocked.

Its subcellular location is the cell inner membrane. In terms of biological role, part of the ABC transporter complex NrtABCD involved in nitrate uptake. The complex is probably also involved in nitrite transport. NrtA is the substrate-binding protein. Binds both nitrate and nitrite with high affinity. The sequence is that of Nitrate/nitrite binding protein NrtA from Synechococcus elongatus (strain ATCC 33912 / PCC 7942 / FACHB-805) (Anacystis nidulans R2).